A 104-amino-acid polypeptide reads, in one-letter code: UPF0145 protein cbdbA1711 (104 aa).

This sequence belongs to the UPF0145 family.

The chain is UPF0145 protein cbdbA1711 from Dehalococcoides mccartyi (strain CBDB1).